The primary structure comprises 238 residues: Probable septum site-determining protein MinC (238 aa).

This sequence belongs to the MinC family. Interacts with MinD and FtsZ.

Functionally, cell division inhibitor that blocks the formation of polar Z ring septums. Rapidly oscillates between the poles of the cell to destabilize FtsZ filaments that have formed before they mature into polar Z rings. Prevents FtsZ polymerization. The sequence is that of Probable septum site-determining protein MinC from Blochmanniella floridana.